A 251-amino-acid chain; its full sequence is Probable-ribose 5-phosphate isomerase (251 aa).

This sequence belongs to the ribose 5-phosphate isomerase family.

The catalysed reaction is aldehydo-D-ribose 5-phosphate = D-ribulose 5-phosphate. It participates in carbohydrate degradation; pentose phosphate pathway; D-ribose 5-phosphate from D-ribulose 5-phosphate (non-oxidative stage): step 1/1. The polypeptide is Probable-ribose 5-phosphate isomerase (rpia-1) (Caenorhabditis elegans).